An 858-amino-acid polypeptide reads, in one-letter code: MAYPFSTIEPKWQKYWEENKTFKTVEDKNYPKDKRLYILDMFPYPSGDGLHVGHPEGYTATDIYSRFLRMSGYNVLHPMGFDSFGLPAENYAIKTGIHPLITTRKNMETFRKQIKSIGLSYDWDREISTSEESYYKWTQWIFLQLFKKGLAYEKEAPINWCPSCLTGLANEEVKDGKCERCGAQIQRKNLRQWILKITEYAERLLEDLDELDWPESIKIMQKNWIGKSTGAEVDFALVDKDGKETGQKIKVYTTRPDTIFGATYMVLAPEHELVKSITTSNQEKAVAAYIEEAAKKSDLERTDLAKNKTGVFTGAYAINPLTEQKIPVWISDYILISYGTGAIMAVPAHDERDFEFAAQFNLPKIKVVAGAEEWESGKRDFSEEPKACTTEDGYSVNSKQFDGLKTEEAKTKITEHLENLGIAKRAVNYKLRDWIFSRQRYWGEPIPLVHCPSCGIVPLNEHDLPLTLPQVESYAPTGTGESPLAAIDSWVNTKCPKCGKEAKRETNTMPQWAGSCWYYLRFIDPHNNEAFADKEKCDYWMPVDLYVGGTEHAVLHLLYARFWHKVLYDLGLVSTKEPFTRLINQGMITSFAYMRKNKSLVPVDKVKKISETEFEDIETGEKLEQVIAKMSKSLKNVINPDDIIKEYGADTLRLYEMFLGPLEVSKPWNTSGIMGVFRFLEKIWNLSDREIYKTPVNDTSTPETKTLTVLLNKTIKKVTEDTASLNFNTAISQMMIFINEVSKHKKIPHYVWYNFVKLLNPYAPHLAEELWQKMGNDESIAYSHWPMFVEKFCVDQTCTVVVQVNGKLRGKFEAEAGTSKEELERLALSNEGAIRNIEGKEIKKIITVPDKLVNIVVQ.

The 'HIGH' region motif lies at 43-54; the sequence is PYPSGDGLHVGH. The short motif at 629-633 is the 'KMSKS' region element; that stretch reads KMSKS. K632 is an ATP binding site.

It belongs to the class-I aminoacyl-tRNA synthetase family.

Its subcellular location is the cytoplasm. The enzyme catalyses tRNA(Leu) + L-leucine + ATP = L-leucyl-tRNA(Leu) + AMP + diphosphate. The sequence is that of Leucine--tRNA ligase from Treponema denticola (strain ATCC 35405 / DSM 14222 / CIP 103919 / JCM 8153 / KCTC 15104).